Here is a 442-residue protein sequence, read N- to C-terminus: MSIDINWEAATSGPDGEKLAERIRSFIHDKFQQIALPRFIRSVEVNSFDFGTVSPELQVRDICDPFNDFYEEDEDGEDLSESSVSDEPAPSSQGLSQSTPNGDAGSSNSSSNGDGGGNTNSRVGYFQRRYPSGEYAGDFPQPLMSPINLGESFNPYLFPRAGTPGIPGGTSNLGYYNMPRGGLSGTQTPLASVASVARGGPLSLAEGWPPPARQRERARSSDADVDSPQSRSRPSTSSTRQRTSTDGGTPHDSAEIPESESVITGHLDSALPTRRMREQKPDDFQVLCRLQYSGNMRLSITAQILLDYPMPSFVGLPLKLNITGFTFDGVAVVAYIRKRIHVCFLSPEDADTLLGADDKMASTEGYHDHHNHHHSGNTNTTGSRRSNDSLLREIRVESEIGRKESGKQVLKNVGKVEKFVLEQVRRIFEEEFVYPSFWTFLV.

The region spanning 1 to 442 (MSIDINWEAA…VYPSFWTFLV (442 aa)) is the SMP-LTD domain. Disordered regions lie at residues 67–125 (NDFY…RVGY), 202–277 (LSLA…RRMR), and 364–387 (EGYH…RRSN). Residues 69–80 (FYEEDEDGEDLS) are compositionally biased toward acidic residues. Residues 90–100 (PSSQGLSQSTP) show a composition bias toward polar residues. The segment covering 101–112 (NGDAGSSNSSSN) has biased composition (low complexity). A compositionally biased stretch (basic and acidic residues) spans 213–222 (RQRERARSSD). A compositionally biased stretch (low complexity) spans 227-245 (SPQSRSRPSTSSTRQRTST).

The protein belongs to the MDM12 family. As to quaternary structure, component of the ER-mitochondria encounter structure (ERMES) or MDM complex, composed of MMM1, MDM10, MDM12 and MDM34. An MMM1 homodimer associates with one molecule of MDM12 on each side in a pairwise head-to-tail manner, and the SMP-LTD domains of MMM1 and MDM12 generate a continuous hydrophobic tunnel for phospholipid trafficking.

Its subcellular location is the mitochondrion outer membrane. It is found in the endoplasmic reticulum membrane. Functionally, component of the ERMES/MDM complex, which serves as a molecular tether to connect the endoplasmic reticulum (ER) and mitochondria. Components of this complex are involved in the control of mitochondrial shape and protein biogenesis, and function in nonvesicular lipid trafficking between the ER and mitochondria. MDM12 is required for the interaction of the ER-resident membrane protein MMM1 and the outer mitochondrial membrane-resident beta-barrel protein MDM10. The MDM12-MMM1 subcomplex functions in the major beta-barrel assembly pathway that is responsible for biogenesis of all mitochondrial outer membrane beta-barrel proteins, and acts in a late step after the SAM complex. The MDM10-MDM12-MMM1 subcomplex further acts in the TOM40-specific pathway after the action of the MDM12-MMM1 complex. Essential for establishing and maintaining the structure of mitochondria and maintenance of mtDNA nucleoids. In Arthroderma otae (strain ATCC MYA-4605 / CBS 113480) (Microsporum canis), this protein is Mitochondrial distribution and morphology protein 12.